We begin with the raw amino-acid sequence, 1013 residues long: MDIS1-interacting receptor like kinase 1 (1013 aa).

An N-terminal signal peptide occupies residues 1–23 (MKMKIIVLFLYYCYIGSTSSVLA). At 24–633 (SIDNVNELSV…SSHSSLHGKR (610 aa)) the chain is on the extracellular side. N61, N82, N101, N137, N146, N151, and N155 each carry an N-linked (GlcNAc...) asparagine glycan. LRR repeat units lie at residues 70–94 (NGNV…ISQL), 95–117 (SSLV…SIPP), 119–137 (KSID…LFSN), 139–163 (SLGL…LGNL), 164–186 (VSLE…SFKN), 187–213 (LQKL…QLPS), 215–234 (ETAI…EFGN), 235–259 (INSL…LGKL), 260–283 (KSLE…IGSI), 284–307 (TTLK…ITKL), 308–331 (KNLQ…ISSL), 333–355 (QLQV…LGKN), 357–379 (PLQW…LCNK), 381–403 (NLTK…LSTC), 405–426 (SLVR…GFGK), 427–451 (LEKL…ISDS), 453–475 (SLSF…ILSI), 477–498 (NLQA…QFQD), 499–523 (CPSL…IASC), 525–547 (KLVS…ITTM), 548–571 (SALA…IGTS), and 573–595 (ALEL…GFLK). N199 carries an N-linked (GlcNAc...) asparagine glycan. N-linked (GlcNAc...) asparagine glycosylation is present at N271. Residue N341 is glycosylated (N-linked (GlcNAc...) asparagine). N-linked (GlcNAc...) asparagine glycans are attached at residues N381, N389, and N417. N-linked (GlcNAc...) asparagine glycans are attached at residues N535, N557, and N578. The chain crosses the membrane as a helical span at residues 634–654 (IVAGWLIGIASVLALGILTIV). Residues 655–1013 (TRTLYKKWYS…FSTSPVNGLL (359 aa)) lie on the Cytoplasmic side of the membrane. T691 is subject to Phosphothreonine. In terms of domain architecture, Protein kinase spans 699–983 (IKESNMIGMG…SMLGEAKPRR (285 aa)). ATP-binding positions include 705 to 713 (IGMGATGIV) and K728. The residue at position 710 (T710) is a Phosphothreonine; by autocatalysis. Phosphothreonine; by autocatalysis is present on residues T741 and T742. Phosphotyrosine is present on residues Y777 and Y818. D831 acts as the Proton acceptor in catalysis. T862 is modified (phosphothreonine; by autocatalysis). S864 carries the phosphoserine; by autocatalysis modification. Y872 is subject to Phosphotyrosine. The residue at position 879 (Y879) is a Phosphotyrosine; by autocatalysis. Phosphothreonine; by autocatalysis occurs at positions 880 and 992. The disordered stretch occupies residues 976–1013 (LGEAKPRRKSNSNEENTSRSLAEKHSSVFSTSPVNGLL). The segment covering 1002-1013 (SVFSTSPVNGLL) has biased composition (polar residues).

Belongs to the protein kinase superfamily. Ser/Thr protein kinase family. Homodimer. Interacts with MDIS1 and LURE1.2. Autophosphorylation induced by the interaction with LURE1.2. As to expression, expressed in pollen tubes.

Its subcellular location is the cell membrane. The catalysed reaction is L-seryl-[protein] + ATP = O-phospho-L-seryl-[protein] + ADP + H(+). The enzyme catalyses L-threonyl-[protein] + ATP = O-phospho-L-threonyl-[protein] + ADP + H(+). Involved in the regulation of procambium maintenance and polarity during vascular-tissue development. Involved in the pollen tube perception of the female signal. Phosphorylates MDSI1. In Arabidopsis thaliana (Mouse-ear cress), this protein is MDIS1-interacting receptor like kinase 1.